A 177-amino-acid polypeptide reads, in one-letter code: Large ribosomal subunit protein uL6 (177 aa).

It belongs to the universal ribosomal protein uL6 family. In terms of assembly, part of the 50S ribosomal subunit.

Its function is as follows. This protein binds to the 23S rRNA, and is important in its secondary structure. It is located near the subunit interface in the base of the L7/L12 stalk, and near the tRNA binding site of the peptidyltransferase center. In Pseudomonas syringae pv. tomato (strain ATCC BAA-871 / DC3000), this protein is Large ribosomal subunit protein uL6.